The chain runs to 193 residues: Molybdenum cofactor guanylyltransferase (193 aa).

GTP is bound by residues 8-10, lysine 21, aspartate 67, and aspartate 98; that span reads LAG. Residue aspartate 98 participates in Mg(2+) binding.

Belongs to the MobA family. Monomer. It depends on Mg(2+) as a cofactor.

Its subcellular location is the cytoplasm. It carries out the reaction Mo-molybdopterin + GTP + H(+) = Mo-molybdopterin guanine dinucleotide + diphosphate. Transfers a GMP moiety from GTP to Mo-molybdopterin (Mo-MPT) cofactor (Moco or molybdenum cofactor) to form Mo-molybdopterin guanine dinucleotide (Mo-MGD) cofactor. This Cereibacter sphaeroides (Rhodobacter sphaeroides) protein is Molybdenum cofactor guanylyltransferase.